We begin with the raw amino-acid sequence, 110 residues long: Insulin (110 aa).

A signal peptide spans 1 to 24; that stretch reads MALWMRLLPLLALLALWGPDPAQA. Cystine bridges form between Cys31/Cys96, Cys43/Cys109, and Cys95/Cys100. Residues 57–87 constitute a propeptide, c peptide; sequence EAEDLQVGQVELGGGPGAGSLQPLALEGSLQ.

Belongs to the insulin family. In terms of assembly, heterodimer of a B chain and an A chain linked by two disulfide bonds.

The protein localises to the secreted. Insulin decreases blood glucose concentration. It increases cell permeability to monosaccharides, amino acids and fatty acids. It accelerates glycolysis, the pentose phosphate cycle, and glycogen synthesis in liver. The protein is Insulin (INS) of Pongo pygmaeus (Bornean orangutan).